Consider the following 514-residue polypeptide: Multifunctional alkaline phosphatase superfamily protein pRL90232 (514 aa).

Residues Asp12, Cys57, Asp324, and His325 each contribute to the Mn(2+) site. Cys57 (nucleophile) is an active-site residue. Position 57 is a 3-oxoalanine (Cys) (Cys57).

The protein belongs to the alkaline phosphatase superfamily. In terms of assembly, homotetramer. Requires Mn(2+) as cofactor. In terms of processing, the conversion to 3-oxoalanine (also known as C-formylglycine, FGly), of a serine or cysteine residue in prokaryotes and of a cysteine residue in eukaryotes, is critical for catalytic activity.

Functionally, hydrolytic enzyme with a broad substrate specificity acting on phosphate diesters and phosphonate monoesters. This is Multifunctional alkaline phosphatase superfamily protein pRL90232 from Rhizobium johnstonii (strain DSM 114642 / LMG 32736 / 3841) (Rhizobium leguminosarum bv. viciae).